Consider the following 511-residue polypeptide: Lysine--tRNA ligase (511 aa).

A disordered region spans residues 1–20 (MQKNTSQPTNTNEQSNQPSL). Residues Glu-422 and Glu-429 each coordinate Mg(2+).

Belongs to the class-II aminoacyl-tRNA synthetase family. In terms of assembly, homodimer. Mg(2+) is required as a cofactor.

The protein resides in the cytoplasm. The catalysed reaction is tRNA(Lys) + L-lysine + ATP = L-lysyl-tRNA(Lys) + AMP + diphosphate. This Chlorobium chlorochromatii (strain CaD3) protein is Lysine--tRNA ligase.